A 218-amino-acid chain; its full sequence is Adenylate kinase (218 aa).

ATP is bound at residue Gly-12–Thr-17. Residues Ser-32 to Val-61 form an NMP region. AMP-binding positions include Thr-33, Arg-38, Gln-59–Val-61, Gly-87–Arg-90, and Gln-94. The interval Gly-128–Asp-165 is LID. Arg-129 lines the ATP pocket. Residues Cys-132 and Cys-135 each coordinate Zn(2+). An ATP-binding site is contributed by Ser-138–Tyr-139. Residues Cys-152 and Cys-155 each contribute to the Zn(2+) site. AMP contacts are provided by Arg-162 and Arg-173. Gln-201 is an ATP binding site.

It belongs to the adenylate kinase family. As to quaternary structure, monomer.

It is found in the cytoplasm. It catalyses the reaction AMP + ATP = 2 ADP. The protein operates within purine metabolism; AMP biosynthesis via salvage pathway; AMP from ADP: step 1/1. Functionally, catalyzes the reversible transfer of the terminal phosphate group between ATP and AMP. Plays an important role in cellular energy homeostasis and in adenine nucleotide metabolism. The chain is Adenylate kinase from Clostridium perfringens (strain 13 / Type A).